We begin with the raw amino-acid sequence, 1323 residues long: Inositol hexakisphosphate and diphosphoinositol-pentakisphosphate kinase (1323 aa).

A substrate-binding site is contributed by 26-27 (RK). Residues Arg109, Lys162, His169, Arg188, 212–215 (EEFI), and 221–223 (DVK) each bind ATP. A substrate-binding site is contributed by 188–189 (RK). Substrate contacts are provided by Lys223 and Arg237. ATP contacts are provided by residues Asp284 and 296–298 (DVN). 301-304 (SFVK) contacts substrate. Positions 355–426 (TTPSGKLAEL…VLELARALVI (72 aa)) are polyphosphoinositide-binding domain. Polar residues-rich tracts occupy residues 933–947 (FNLSTNPKPATSSRS) and 977–992 (VTPTQLSTPSVTNDDL). Disordered regions lie at residues 933-1022 (FNLS…SEDD), 1043-1107 (AMAD…GGGK), and 1134-1155 (IVIPTPVPSTTTAVVEDEASER). The segment covering 993-1006 (SISSNAESTAAEST) has biased composition (low complexity). Basic and acidic residues predominate over residues 1062–1074 (KSMEEGDKPHGEW). Positions 1090–1101 (SNEMESNNESME) are enriched in low complexity.

Belongs to the histidine acid phosphatase family. VIP1 subfamily.

It localises to the cytoplasm. It is found in the cytosol. The enzyme catalyses 1D-myo-inositol hexakisphosphate + ATP = 1-diphospho-1D-myo-inositol 2,3,4,5,6-pentakisphosphate + ADP. It catalyses the reaction 5-diphospho-1D-myo-inositol 1,2,3,4,6-pentakisphosphate + ATP + H(+) = 1,5-bis(diphospho)-1D-myo-inositol 2,3,4,6-tetrakisphosphate + ADP. Functionally, bifunctional inositol kinase that acts in concert with the IP6K kinases to synthesize the diphosphate group-containing inositol pyrophosphates diphosphoinositol pentakisphosphate, PP-InsP5, and bis-diphosphoinositol tetrakisphosphate, (PP)2-InsP4. PP-InsP5 and (PP)2-InsP4, also respectively called InsP7 and InsP8, may regulate a variety of cellular processes, including apoptosis, vesicle trafficking, cytoskeletal dynamics, and exocytosis. Phosphorylates inositol hexakisphosphate (InsP6) at position 1 to produce PP-InsP5 which is in turn phosphorylated by IP6Ks to produce (PP)2-InsP4. Alternatively, phosphorylates PP-InsP5 at position 1, produced by IP6Ks from InsP6, to produce (PP)2-InsP4. The polypeptide is Inositol hexakisphosphate and diphosphoinositol-pentakisphosphate kinase (Caenorhabditis elegans).